We begin with the raw amino-acid sequence, 161 residues long: 3-isopropylmalate dehydratase small subunit (161 aa).

The protein belongs to the LeuD family. LeuD type 2 subfamily. Heterodimer of LeuC and LeuD.

It catalyses the reaction (2R,3S)-3-isopropylmalate = (2S)-2-isopropylmalate. It participates in amino-acid biosynthesis; L-leucine biosynthesis; L-leucine from 3-methyl-2-oxobutanoate: step 2/4. Its function is as follows. Catalyzes the isomerization between 2-isopropylmalate and 3-isopropylmalate, via the formation of 2-isopropylmaleate. The sequence is that of 3-isopropylmalate dehydratase small subunit from Clostridium botulinum (strain Eklund 17B / Type B).